Reading from the N-terminus, the 983-residue chain is Eukaryotic translation initiation factor 4E transporter (983 aa).

Residues 1 to 22 are disordered; sequence MEKSVAETENGDAFLELKKLPT. Phosphoserine is present on Ser-4. A YXXXXLphi motif motif is present at residues 29-35; sequence YTKEELL. Residues 40–99 form a disordered region; sequence RPYSKQRPSCLSEKYDSDGVWDPEKWHASLYPASGRSSPVESLKKESESDRPSLVRRIAD. Over residues 52–66 the composition is skewed to basic and acidic residues; it reads EKYDSDGVWDPEKWH. Phosphoserine occurs at positions 73 and 77. A compositionally biased stretch (basic and acidic residues) spans 81–99; it reads SLKKESESDRPSLVRRIAD. Ser-114, Ser-119, Ser-135, and Ser-137 each carry phosphoserine. Residues 130 to 160 form an interaction with CSDE1 region; the sequence is VSSRRSGSPLEKDSDGLRLLGGRRIGSGRII. Residues 194–210 carry the Nuclear localization signal motif; that stretch reads RREFGDSKRVFGERRRN. Residues 206–229 form a disordered region; it reads ERRRNDSYTEEEPEWFSAGPTSQS. Residues 218 to 239 form an interaction with DDX6 region; that stretch reads PEWFSAGPTSQSETIELTGFDD. Phosphoserine is present on residues Ser-300, Ser-344, Ser-352, and Ser-373. Residues 341–360 are disordered; the sequence is SNPSRSGSRSSSLGSTPHEE. Over residues 344-355 the composition is skewed to low complexity; sequence SRSGSRSSSLGS. A Glycyl lysine isopeptide (Lys-Gly) (interchain with G-Cter in SUMO2) cross-link involves residue Lys-409. Ser-416 carries the phosphoserine modification. The Nuclear export signal signature appears at 437–446; the sequence is VEAGLKGLKV. Positions 447-489 are interaction with LSM14A; it reads DQQMKNSTPFMAEHLEETLSAASSNRQLKKDGDMTAFNKLVNT. Lys-485 carries the post-translational modification N6-acetyllysine. Phosphoserine is present on residues Ser-563 and Ser-586. Disordered regions lie at residues 585–616, 642–693, 708–800, and 906–951; these read PSPIGFPSGPQQLLGDPFQGMRKPMSPVSAQM, FYQP…MLSP, REKT…VPGT, and LHPP…SSPV. The Nuclear export signal motif lies at 612–637; sequence VSAQMSQLELQQAALEGLALPHDLAV. The span at 651–660 shows a compositional bias: basic and acidic residues; that stretch reads QVDRTRDGLR. Ser-692 is modified (phosphoserine). The interval 694–712 is interaction with PATL1; the sequence is SFTPTSVIRKMYESREKTK. Over residues 724-734 the composition is skewed to basic and acidic residues; sequence DGKEDTQKTSE. 2 stretches are compositionally biased toward polar residues: residues 735-774 and 910-928; these read ENLLSSNPIPNTDQDSSTTNPKLSTLQRSSCSTPLSQTSR and GSSSQAAAISVQTPQNVPS. Phosphoserine occurs at positions 751, 919, and 949. The segment at 938-983 is interaction with LSM14A; sequence QLEHRTSQRSSSPVGLAKWFGSDVLQQPLPSMPTKVISVDELEYRQ.

The protein belongs to the 4E-T/EIF4E-T family. In terms of assembly, interacts (via YXXXXLphi motif) with EIF4E. Interacts (via YXXXXLphi motif) with EIF4E2. Interacts with DDX6. Interacts with CSDE1/UNR. Interacts with CNOT1; promoting association with the CCR4-NOT complex. Interacts with LSM14A; promoting EIF4ENIF1 localization to P-bodies. Interacts with PATL1. Interacts with importin beta only in the presence of importin alpha, suggesting a direct interaction with importin alpha. Interacts with APOBEC3G in an RNA-dependent manner. Post-translationally, phosphorylation by MAPK8/JNK1 and or MAPK9/JNK2 in response to oxidative stress promotes P-body assembly. Phosphorylated during meiotic maturation. In terms of tissue distribution, highly expressed in developing oocytes.

Its subcellular location is the cytoplasm. The protein localises to the nucleus. It is found in the PML body. It localises to the nucleus speckle. Functionally, EIF4E-binding protein that regulates translation and stability of mRNAs in processing bodies (P-bodies). Plays a key role in P-bodies to coordinate the storage of translationally inactive mRNAs in the cytoplasm and prevent their degradation. Acts as a binding platform for multiple RNA-binding proteins: promotes deadenylation of mRNAs via its interaction with the CCR4-NOT complex, and blocks decapping via interaction with eIF4E (EIF4E and EIF4E2), thereby protecting deadenylated and repressed mRNAs from degradation. Component of a multiprotein complex that sequesters and represses translation of proneurogenic factors during neurogenesis. Promotes miRNA-mediated translational repression. Involved in mRNA translational repression mediated by the miRNA effector TNRC6B by protecting TNRC6B-targeted mRNAs from decapping and subsequent decay. Required for the formation of P-bodies. Also acts as a nucleoplasmic shuttling protein, which mediates the nuclear import of EIF4E and DDX6 by a piggy-back mechanism. The chain is Eukaryotic translation initiation factor 4E transporter from Mus musculus (Mouse).